The chain runs to 192 residues: Adenylate kinase (192 aa).

Residue 10 to 18 (GVPGVGSTT) coordinates ATP.

The protein belongs to the archaeal adenylate kinase family. Monomer.

It is found in the cytoplasm. The enzyme catalyses AMP + ATP = 2 ADP. In Methanocaldococcus jannaschii (strain ATCC 43067 / DSM 2661 / JAL-1 / JCM 10045 / NBRC 100440) (Methanococcus jannaschii), this protein is Adenylate kinase (adkA).